A 447-amino-acid polypeptide reads, in one-letter code: Trigger factor (447 aa).

In terms of domain architecture, PPIase FKBP-type spans 174-261 (GDIAVLGFKG…LKDLKTRELP (88 aa)).

This sequence belongs to the FKBP-type PPIase family. Tig subfamily.

Its subcellular location is the cytoplasm. The catalysed reaction is [protein]-peptidylproline (omega=180) = [protein]-peptidylproline (omega=0). Functionally, involved in protein export. Acts as a chaperone by maintaining the newly synthesized protein in an open conformation. Functions as a peptidyl-prolyl cis-trans isomerase. This is Trigger factor from Synechococcus sp. (strain CC9902).